We begin with the raw amino-acid sequence, 477 residues long: Inner membrane protein YbhI (477 aa).

Residues 1 to 5 lie on the Cytoplasmic side of the membrane; that stretch reads MNKKS. A helical membrane pass occupies residues 6-26; sequence LWKLILILAIPCIIGFMPAPA. A topological domain (periplasmic) is located at residue Gly27. The chain crosses the membrane as a helical span at residues 28 to 48; it reads LSELAWVLFGIYLAAIVGLVI. Residues 49–50 are Cytoplasmic-facing; the sequence is KP. A helical transmembrane segment spans residues 51–71; it reads FPEPVVLLIAVAASMVVVGNL. At 72–87 the chain is on the periplasmic side; the sequence is SDGAFKTTAVLSGYSS. A helical transmembrane segment spans residues 88-108; it reads GTTWLVFSAFTLSAAFVTTGL. Residues 109 to 148 are Cytoplasmic-facing; it reads GKRIAYLLIGKIGNTTLGLGYVTVFLDLVLAPATPSNTAR. A helical membrane pass occupies residues 149 to 169; the sequence is AGGIVLPIINSVAVALGSEPE. Over 170–219 the chain is Periplasmic; the sequence is KSPRRVGHYLMMSIYMVTKTTSYMFFTAMAGNILALKMINDILHLQISWG. The helical transmembrane segment at 220–240 threads the bilayer; the sequence is GWALAAGLPGIIMLLVTPLVI. Residues 241–272 lie on the Cytoplasmic side of the membrane; it reads YTMYPPEIKKVDNKTIAKAGLAELGPMKIREK. The helical transmembrane segment at 273–293 threads the bilayer; it reads MLLGVFVLALLGWIFSKSLGV. The Periplasmic portion of the chain corresponds to 294-297; the sequence is DEST. Residues 298–318 form a helical membrane-spanning segment; that stretch reads VAIVVMATMLLLGIVTWEDVV. The Cytoplasmic segment spans residues 319 to 356; that stretch reads KNKGGWNTLIWYGGIIGLSSLLSKVKFFEWLAEVFKNN. The chain crosses the membrane as a helical span at residues 357-377; the sequence is LAFDGHGNVAFFVIIFLSIIV. Position 378 (Arg378) is a topological domain, periplasmic. Residues 379–399 form a helical membrane-spanning segment; it reads YFFASGSAYIVAMLPVFAMLA. Residues 400–445 lie on the Cytoplasmic side of the membrane; it reads NVSGAPLMLTALALLFSNSYGGMVTHYGGAAGPVIFGVGYNDIKSW. A helical transmembrane segment spans residues 446 to 466; it reads WLVGAVLTILTFLVHITLGVW. Residues 467 to 477 are Periplasmic-facing; sequence WWNMLIGWNML.

The protein belongs to the SLC13A/DASS transporter (TC 2.A.47) family. DIT1 subfamily.

The protein resides in the cell inner membrane. This Escherichia coli (strain K12) protein is Inner membrane protein YbhI (ybhI).